The chain runs to 234 residues: Orotidine 5'-phosphate decarboxylase (234 aa).

Residues Asp11, Lys33, 60 to 69 (DLKFHDIPNT), Thr120, Arg181, Gln190, Gly210, and Arg211 contribute to the substrate site. Lys62 functions as the Proton donor in the catalytic mechanism.

Belongs to the OMP decarboxylase family. Type 1 subfamily. As to quaternary structure, homodimer.

It carries out the reaction orotidine 5'-phosphate + H(+) = UMP + CO2. Its pathway is pyrimidine metabolism; UMP biosynthesis via de novo pathway; UMP from orotate: step 2/2. Functionally, catalyzes the decarboxylation of orotidine 5'-monophosphate (OMP) to uridine 5'-monophosphate (UMP). The polypeptide is Orotidine 5'-phosphate decarboxylase (Shewanella sediminis (strain HAW-EB3)).